Consider the following 243-residue polypeptide: 7-carboxy-7-deazaguanine synthase (243 aa).

Residues 15–17 and Arg-30 contribute to the substrate site; that span reads IQG. In terms of domain architecture, Radical SAM core spans 21 to 239; it reads VIGQKTMFVR…PQLHTLLWGN (219 aa). 3 residues coordinate [4Fe-4S] cluster: Cys-34, Cys-38, and Cys-41. Ser-43 serves as a coordination point for Mg(2+). Residue Ser-81 coordinates substrate. S-adenosyl-L-methionine contacts are provided by residues Gly-83 and 127-129; that span reads SPK.

Belongs to the radical SAM superfamily. 7-carboxy-7-deazaguanine synthase family. Homodimer. It depends on [4Fe-4S] cluster as a cofactor. Requires S-adenosyl-L-methionine as cofactor. Mg(2+) serves as cofactor.

The catalysed reaction is 6-carboxy-5,6,7,8-tetrahydropterin + H(+) = 7-carboxy-7-deazaguanine + NH4(+). It participates in purine metabolism; 7-cyano-7-deazaguanine biosynthesis. Functionally, catalyzes the complex heterocyclic radical-mediated conversion of 6-carboxy-5,6,7,8-tetrahydropterin (CPH4) to 7-carboxy-7-deazaguanine (CDG), a step common to the biosynthetic pathways of all 7-deazapurine-containing compounds. In Bacillus subtilis (strain 168), this protein is 7-carboxy-7-deazaguanine synthase.